The primary structure comprises 585 residues: Bestrophin-1 (585 aa).

Residues 1–31 (MTITYTSQVANARLGSFSRLLLCWRGSIYKL) are Cytoplasmic-facing. A Ca(2+)-binding site is contributed by Ala-10. A helical membrane pass occupies residues 32 to 51 (LYGEFFIFLLCYYIIRFIYR). At 52–60 (LALTEEQQL) the chain is on the extracellular side. A helical transmembrane segment spans residues 61 to 82 (MFEKLTLYCDSYIQLIPISFVL). The Cytoplasmic segment spans residues 83–237 (GFYVTLVVTR…DWISIPLVYT (155 aa)). Residues 238–255 (QVVTVAVYSFFLTCLVGR) traverse the membrane as a helical segment. Topologically, residues 256–274 (QFLNPAKAYPGHELDLVVP) are extracellular. The chain crosses the membrane as a helical span at residues 275–288 (VFTFLQFFFYVGWL). Topologically, residues 289–585 (KVAEQLINPF…ALENRDEAHS (297 aa)) are cytoplasmic. Residues Gln-293, Asn-296, Asp-301, and Asp-304 each coordinate Ca(2+). The auto-inhibitory segment stretch occupies residues 346 to 379 (PYTAASAQFRRASFMGSTFNISLNKEEMEFQPNQ).

Belongs to the anion channel-forming bestrophin (TC 1.A.46) family. Calcium-sensitive chloride channel subfamily. In terms of assembly, interacts with YWHAG; this interaction promotes the ligand-gated L-glutamate channel activity leading to the positive regulation of NMDA glutamate receptor activity through the L-glutamate secretion.

It localises to the cell membrane. Its subcellular location is the basolateral cell membrane. The catalysed reaction is chloride(in) = chloride(out). The enzyme catalyses hydrogencarbonate(in) = hydrogencarbonate(out). It catalyses the reaction 4-aminobutanoate(in) = 4-aminobutanoate(out). It carries out the reaction L-glutamate(out) = L-glutamate(in). Its function is as follows. Ligand-gated anion channel that allows the movement of anions across cell membranes when activated by calcium (Ca2+). Allows the movement of chloride and hydrogencarbonate. Found in a partially open conformation leading to significantly smaller chloride movement. Upon F2R/PAR-1 activation, the sequestered calcium is released into the cytosol of astrocytes, leading to the (Ca2+)-dependent release of L-glutamate into the synaptic cleft that targets the neuronal postsynaptic GRIN2A/NMDAR receptor resulting in the synaptic plasticity regulation. Upon activation of the norepinephrine-alpha-1 adrenergic receptor signaling pathway, transports as well D-serine than L-glutamate in a (Ca2+)-dependent manner, leading to activation of adjacent NMDAR receptors and therefore regulates the heterosynaptic long-term depression and metaplasticity during initial memory acquisition. Releases the 4-aminobutanoate neurotransmitter in a (Ca2+)-dependent manner, and participates in its tonic release from cerebellar glial cells. This chain is Bestrophin-1 (BEST1), found in Macaca fascicularis (Crab-eating macaque).